Consider the following 100-residue polypeptide: Aspartyl/glutamyl-tRNA(Asn/Gln) amidotransferase subunit C (100 aa).

This sequence belongs to the GatC family. As to quaternary structure, heterotrimer of A, B and C subunits.

It catalyses the reaction L-glutamyl-tRNA(Gln) + L-glutamine + ATP + H2O = L-glutaminyl-tRNA(Gln) + L-glutamate + ADP + phosphate + H(+). The enzyme catalyses L-aspartyl-tRNA(Asn) + L-glutamine + ATP + H2O = L-asparaginyl-tRNA(Asn) + L-glutamate + ADP + phosphate + 2 H(+). Its function is as follows. Allows the formation of correctly charged Asn-tRNA(Asn) or Gln-tRNA(Gln) through the transamidation of misacylated Asp-tRNA(Asn) or Glu-tRNA(Gln) in organisms which lack either or both of asparaginyl-tRNA or glutaminyl-tRNA synthetases. The reaction takes place in the presence of glutamine and ATP through an activated phospho-Asp-tRNA(Asn) or phospho-Glu-tRNA(Gln). The sequence is that of Aspartyl/glutamyl-tRNA(Asn/Gln) amidotransferase subunit C from Streptococcus gordonii (strain Challis / ATCC 35105 / BCRC 15272 / CH1 / DL1 / V288).